Consider the following 133-residue polypeptide: Small ribosomal subunit protein uS9 (133 aa).

Residues 98–113 show a composition bias toward basic and acidic residues; the sequence is RKPLKTEGHLSRDPRA. The tract at residues 98–133 is disordered; the sequence is RKPLKTEGHLSRDPRAKERRKYGLKKARKAPQFSKR. Basic residues predominate over residues 114–133; it reads KERRKYGLKKARKAPQFSKR.

It belongs to the universal ribosomal protein uS9 family.

This is Small ribosomal subunit protein uS9 from Synechococcus sp. (strain CC9902).